A 315-amino-acid polypeptide reads, in one-letter code: Ribosomal RNA small subunit methyltransferase H (315 aa).

S-adenosyl-L-methionine contacts are provided by residues 35–37, Asp-55, Phe-80, Asp-102, and Gln-109; that span reads GGH.

This sequence belongs to the methyltransferase superfamily. RsmH family.

It is found in the cytoplasm. It carries out the reaction cytidine(1402) in 16S rRNA + S-adenosyl-L-methionine = N(4)-methylcytidine(1402) in 16S rRNA + S-adenosyl-L-homocysteine + H(+). Its function is as follows. Specifically methylates the N4 position of cytidine in position 1402 (C1402) of 16S rRNA. The sequence is that of Ribosomal RNA small subunit methyltransferase H from Buchnera aphidicola subsp. Baizongia pistaciae (strain Bp).